We begin with the raw amino-acid sequence, 642 residues long: Threonine--tRNA ligase (642 aa).

Residues methionine 1–threonine 61 form the TGS domain. Positions aspartate 243 to proline 534 are catalytic. Lysine 286 bears the N6-acetyllysine mark. Zn(2+) contacts are provided by cysteine 334, histidine 385, and histidine 511.

It belongs to the class-II aminoacyl-tRNA synthetase family. In terms of assembly, homodimer. Zn(2+) is required as a cofactor.

Its subcellular location is the cytoplasm. It catalyses the reaction tRNA(Thr) + L-threonine + ATP = L-threonyl-tRNA(Thr) + AMP + diphosphate + H(+). Functionally, catalyzes the attachment of threonine to tRNA(Thr) in a two-step reaction: L-threonine is first activated by ATP to form Thr-AMP and then transferred to the acceptor end of tRNA(Thr). Also edits incorrectly charged L-seryl-tRNA(Thr). This chain is Threonine--tRNA ligase, found in Shigella flexneri serotype 5b (strain 8401).